Consider the following 676-residue polypeptide: Portal protein (676 aa).

The disordered stretch occupies residues 383-404; the sequence is PGFGKGGNSRGSAGQDQGGRAP. Residues 422 to 443 form a putative leucine zipper motif region; sequence LEGYINNLFGTIERLRETNAGL. Residues 627–676 are disordered; it reads PPPSPVGADFRPGASPRGRSRSRSPGRTARGAPDQGGGIGHRDGRRDGRR. Basic and acidic residues predominate over residues 666-676; it reads GHRDGRRDGRR.

It belongs to the herpesviridae portal protein family. Homododecamerizes. Interacts with terminase subunits TRM1 and TRM3.

It localises to the virion. It is found in the host nucleus. Its function is as follows. Forms a portal in the viral capsid through which viral DNA is translocated during DNA packaging. Assembles as a dodecamer at a single fivefold axe of the T=16 icosahedric capsid. Binds to the molecular motor that translocates the viral DNA, termed terminase. This is Portal protein (UL6) from Human herpesvirus 1 (strain 17) (HHV-1).